Reading from the N-terminus, the 404-residue chain is Cysteine desulfurase IscS (404 aa).

Residues 75–76, asparagine 155, glutamine 183, and 203–205 contribute to the pyridoxal 5'-phosphate site; these read AT and SAH. Lysine 206 is subject to N6-(pyridoxal phosphate)lysine. Threonine 243 serves as a coordination point for pyridoxal 5'-phosphate. Residue cysteine 328 is the Cysteine persulfide intermediate of the active site. A [2Fe-2S] cluster-binding site is contributed by cysteine 328.

The protein belongs to the class-V pyridoxal-phosphate-dependent aminotransferase family. NifS/IscS subfamily. As to quaternary structure, homodimer. Forms a heterotetramer with IscU, interacts with other sulfur acceptors. It depends on pyridoxal 5'-phosphate as a cofactor.

The protein localises to the cytoplasm. The enzyme catalyses (sulfur carrier)-H + L-cysteine = (sulfur carrier)-SH + L-alanine. It functions in the pathway cofactor biosynthesis; iron-sulfur cluster biosynthesis. Its function is as follows. Master enzyme that delivers sulfur to a number of partners involved in Fe-S cluster assembly, tRNA modification or cofactor biosynthesis. Catalyzes the removal of elemental sulfur atoms from cysteine to produce alanine. Functions as a sulfur delivery protein for Fe-S cluster synthesis onto IscU, an Fe-S scaffold assembly protein, as well as other S acceptor proteins. This is Cysteine desulfurase IscS from Pseudomonas putida (strain GB-1).